The sequence spans 416 residues: Peptide chain release factor subunit 1 (416 aa).

This sequence belongs to the eukaryotic release factor 1 family. Heterodimer of two subunits, one of which binds GTP.

The protein resides in the cytoplasm. Directs the termination of nascent peptide synthesis (translation) in response to the termination codons UAA, UAG and UGA. The sequence is that of Peptide chain release factor subunit 1 from Halorubrum lacusprofundi (strain ATCC 49239 / DSM 5036 / JCM 8891 / ACAM 34).